The chain runs to 509 residues: Putative cytochrome P450 CYP13A8 (509 aa).

Residue Cys455 participates in heme binding.

This sequence belongs to the cytochrome P450 family. The cofactor is heme.

Functionally, cytochromes P450 are a group of heme-thiolate monooxygenases. They oxidize a variety of structurally unrelated compounds, including steroids, fatty acids, and xenobiotics. The chain is Putative cytochrome P450 CYP13A8 (cyp-13A8) from Caenorhabditis elegans.